A 215-amino-acid chain; its full sequence is Cytochrome b6 (215 aa).

The chain crosses the membrane as a helical span at residues 32–52; it reads IFYCLGGITLTCFLVQIATGF. Residue C35 participates in heme c binding. H86 and H100 together coordinate heme b. The next 3 helical transmembrane spans lie at 90 to 110, 116 to 136, and 186 to 206; these read ASMMVLVMILHVFRVYLTGGF, LTWVTGVILAVLTVSFGVTGY, and LHTFVLPLLTAVFMLMHFLMI. The heme b site is built by H187 and H202.

The protein belongs to the cytochrome b family. PetB subfamily. The 4 large subunits of the cytochrome b6-f complex are cytochrome b6, subunit IV (17 kDa polypeptide, PetD), cytochrome f and the Rieske protein, while the 4 small subunits are PetG, PetL, PetM and PetN. The complex functions as a dimer. Requires heme b as cofactor. It depends on heme c as a cofactor.

The protein resides in the plastid. It is found in the chloroplast thylakoid membrane. Functionally, component of the cytochrome b6-f complex, which mediates electron transfer between photosystem II (PSII) and photosystem I (PSI), cyclic electron flow around PSI, and state transitions. In Adiantum capillus-veneris (Maidenhair fern), this protein is Cytochrome b6.